Consider the following 498-residue polypeptide: ATP synthase subunit beta, chloroplastic (498 aa).

Thr-6 is subject to Phosphothreonine. The residue at position 13 (Ser-13) is a Phosphoserine. An ATP-binding site is contributed by Gly-172–Thr-179.

This sequence belongs to the ATPase alpha/beta chains family. F-type ATPases have 2 components, CF(1) - the catalytic core - and CF(0) - the membrane proton channel. CF(1) has five subunits: alpha(3), beta(3), gamma(1), delta(1), epsilon(1). CF(0) has four main subunits: a(1), b(1), b'(1) and c(9-12).

It is found in the plastid. The protein resides in the chloroplast thylakoid membrane. The catalysed reaction is ATP + H2O + 4 H(+)(in) = ADP + phosphate + 5 H(+)(out). Functionally, produces ATP from ADP in the presence of a proton gradient across the membrane. The catalytic sites are hosted primarily by the beta subunits. The sequence is that of ATP synthase subunit beta, chloroplastic from Crucihimalaya wallichii (Rock-cress).